Here is a 535-residue protein sequence, read N- to C-terminus: Dual specificity calcium/calmodulin-dependent 3',5'-cyclic nucleotide phosphodiesterase 1B (535 aa).

The disordered stretch occupies residues methionine 1–glutamate 21. 2 positions are modified to phosphoserine: serine 7 and serine 14. Calmodulin-binding stretches follow at residues proline 26–glutamate 46 and glutamate 117–arginine 140. The PDEase domain maps to valine 145 to glycine 502. Histidine 222 acts as the Proton donor in catalysis. 4 residues coordinate Zn(2+): histidine 226, histidine 262, aspartate 263, and aspartate 369. Aspartate 263 is a Mg(2+) binding site. Disordered stretches follow at residues proline 445–asparagine 474 and tryptophan 495–aspartate 535. Over residues lysine 454–glutamine 463 the composition is skewed to polar residues. Phosphoserine is present on residues serine 465 and serine 513.

Belongs to the cyclic nucleotide phosphodiesterase family. PDE1 subfamily. In terms of assembly, homodimer. Zn(2+) serves as cofactor. The cofactor is Mg(2+).

The protein localises to the cytoplasm. Its subcellular location is the cytosol. It catalyses the reaction a nucleoside 3',5'-cyclic phosphate + H2O = a nucleoside 5'-phosphate + H(+). The enzyme catalyses 3',5'-cyclic GMP + H2O = GMP + H(+). It carries out the reaction 3',5'-cyclic AMP + H2O = AMP + H(+). With respect to regulation, type I PDE are activated by the binding of calmodulin in the presence of Ca(2+). Cyclic nucleotide phosphodiesterase with a dual specificity for the second messengers cAMP and cGMP, which are key regulators of many important physiological processes. Has a preference for cGMP as a substrate. This Cricetulus griseus (Chinese hamster) protein is Dual specificity calcium/calmodulin-dependent 3',5'-cyclic nucleotide phosphodiesterase 1B.